The chain runs to 935 residues: Clumping factor A (935 aa).

Residues 1–39 (MNMKKKEKHAIRKKSIGVASVLVGTLIGFGLLSSKEADA) form the signal peptide. The YSIRK-G/S signaling motif motif lies at 9–20 (HAIRKKSIGVAS). Disordered stretches follow at residues 34 to 205 (SKEA…VSQA) and 529 to 906 (FNNG…SEDE). The tract at residues 40-542 (SENSVTQSDS…SGSGDGIDKP (503 aa)) is ligand binding A region. Low complexity predominate over residues 47–65 (SDSASNESKSNDSSSVSAA). Over residues 71–105 (TNVSDTKTSSNTNNGETSVAQNPAQQETTQSSSTN) the composition is skewed to polar residues. Composition is skewed to low complexity over residues 106–132 (ATTEETPVTGEATTTTTNQANTPATTQ) and 143–162 (NQTSNETTSNDTNTVSSVNS). Residues 163–205 (PQNSTNAENVSTTQDTSTEATPSNNESAPQNTDASNKDVVSQA) show a composition bias toward polar residues. Residues 547–565 (QPDEPGEIEPIPEDSDSDP) are compositionally biased toward acidic residues. Residues 566–598 (GSDSGSDSNSDSGSDSGSDSTSDSGSDSASDSD) are compositionally biased toward low complexity. Residues 599–863 (SASDSDSASD…DNDSDSDSNS (265 aa)) are compositionally biased toward acidic residues. Residues 864-882 (DSESGSNNNVVPPNSPKNG) are compositionally biased toward low complexity. Basic and acidic residues predominate over residues 889–898 (NEAKDSKEPL). An LPXTG sorting signal motif is present at residues 898-902 (LPDTG). Thr-901 carries the pentaglycyl murein peptidoglycan amidated threonine modification. Positions 902-935 (GSEDEANTSLIWGLLASLGSLLLFRRKKENKDKK) are cleaved as a propeptide — removed by sortase.

Belongs to the serine-aspartate repeat-containing protein (SDr) family.

It localises to the secreted. The protein resides in the cell wall. Its function is as follows. Cell surface-associated protein implicated in virulence. Promotes bacterial attachment exclusively to the gamma-chain of human fibrinogen. Induces formation of bacterial clumps. The chain is Clumping factor A (clfA) from Staphylococcus aureus (strain Mu50 / ATCC 700699).